A 144-amino-acid polypeptide reads, in one-letter code: Putative pre-16S rRNA nuclease (144 aa).

It belongs to the YqgF nuclease family.

It localises to the cytoplasm. Could be a nuclease involved in processing of the 5'-end of pre-16S rRNA. The sequence is that of Putative pre-16S rRNA nuclease from Lacticaseibacillus casei (strain BL23) (Lactobacillus casei).